The sequence spans 695 residues: MTTHGWGTRILLGAALAALTLLGGCNDADSGERNRLPGFVSGSVRTTAYDGTSDDLLTAGLGKTGLASTAPAFANPSRPTSAELRRLAIWSNYRALVDMSANGGYGRFWGPNVDLDGNATLGEGKIPGTEYLAYSDDGSGRKNVTLLVQVPASFDPKQPCIVTATSSGSRGVYGAISAAGEWGLKRGCAVAYNDKGGGNGAHELGSDTITLIDGTLANAVLAGNASLFTANVTSGDLAAFNGRFPNRYAFKHAHSQQNPEQDWGHATLQAVEFAYWALNEQFGPVLDSSHHGVRYHPGDITTIAASVSNGGGAALAAAEQDTRRWITAVVVGEPQVNVRMSPNAIVREGGQPAPSFGRPLADYATLANLLQPCAAASASLAGEPYLSGLPAATTQSIRTQRCATLAAAGLVSGADTQSQAADALAQLHAAGYLADSDLLQASMWDSQAIPAIAVTYANAYTRSRVTDNLCNFSFATTSAPTGTVASPAASPMPAIFGVGNGVPPTGGIDLVFNTGAGVDHRLATPDASFAGALCLRQLWTNGMLDMPANVDAVRVNANLQGKPAIIVQGRSDALVPVNHASRAYVAQNSISEGARSQLVFYEVTNGQHFDAFLPVAGFDTRFVPVHYYNVQALNLMWRHLKNGAALPPSQVIRTVPRGGTPGAAPALTSANLPPIATSPGANAITAGAGAIDVPL.

A signal peptide spans Met1 to Ala17. Residue Ser308 is the Charge relay system of the active site.

It belongs to the D-(-)-3-hydroxybutyrate oligomer hydrolase family.

Its subcellular location is the secreted. The catalysed reaction is (3R)-hydroxybutanoate dimer + H2O = 2 (R)-3-hydroxybutanoate + H(+). Its pathway is lipid metabolism; butanoate metabolism. In terms of biological role, participates in the degradation of poly-3-hydroxybutyrate (PHB). It works downstream of poly(3-hydroxybutyrate) depolymerase, hydrolyzing D(-)-3-hydroxybutyrate oligomers of various length (3HB-oligomers) into 3HB-monomers. This is D-(-)-3-hydroxybutyrate oligomer hydrolase from Burkholderia ambifaria (strain ATCC BAA-244 / DSM 16087 / CCUG 44356 / LMG 19182 / AMMD) (Burkholderia cepacia (strain AMMD)).